The sequence spans 66 residues: Muscarinic toxin alpha (66 aa).

4 disulfide bridges follow: cysteine 3–cysteine 24, cysteine 17–cysteine 42, cysteine 46–cysteine 58, and cysteine 59–cysteine 64.

Belongs to the three-finger toxin family. Short-chain subfamily. Aminergic toxin sub-subfamily. In terms of tissue distribution, expressed by the venom gland.

The protein resides in the secreted. Its function is as follows. Selectively binds with high-affinity to the a2B-adrenoceptor subtype (ADRA2B). The toxin reversibly binds to ADRA2B, and its mode of inhibition is non-competitive. The toxin has also been described to bind with high affinity to all muscarinic receptor subtypes (Ki=23 nM (on CHRM1), Ki=44 nM (on CHRM2), Ki=3 nM (on CHRM3), Ki=5 nM (on CHRM4), and Ki=8 nM (on CHRM5)) but no other data support these affinity values. This is Muscarinic toxin alpha from Dendroaspis polylepis polylepis (Black mamba).